The chain runs to 1171 residues: 7,8-linoleate diol synthase (1171 aa).

A compositionally biased stretch (low complexity) spans 1 to 22 (MASSSSSGSSTRSSSPSDPPSS). The disordered stretch occupies residues 1–56 (MASSSSSGSSTRSSSPSDPPSSFFQKLGAFLGLFSKPQPPRPDYPHAPGNSAREEQ). The fatty acid alpha-dioxygenase stretch occupies residues 114–457 (TDGLITGLWE…DGSFEDEGLI (344 aa)). A heme b-binding site is contributed by histidine 213. 5 residues coordinate Ca(2+): aspartate 214, serine 229, tyrosine 231, aspartate 233, and serine 235. Tyrosine 385 is an active-site residue. Position 388 (histidine 388) interacts with heme b. The tract at residues 675-1171 (KILNNQKDFK…PMNMKIRWDD (497 aa)) is epoxy alcohol synthase. The tract at residues 873-900 (GLANGGANGHANGNANGHTNGNGIHQNG) is disordered. Over residues 881-895 (GHANGNANGHTNGNG) the composition is skewed to low complexity. A heme-binding site is contributed by cysteine 1089.

This sequence in the N-terminal section; belongs to the peroxidase family. It in the C-terminal section; belongs to the cytochrome P450 family. Homotetramer. Requires heme b as cofactor. The cofactor is Ca(2+). It depends on heme as a cofactor.

The enzyme catalyses (9Z,12Z)-octadecadienoate + O2 = (8R,9Z,12Z)-8-hydroperoxyoctadeca-9,12-dienoate. The catalysed reaction is (8R,9Z,12Z)-8-hydroperoxyoctadeca-9,12-dienoate = (7S,8S,9Z,12Z)-7,8-dihydroxyoctadeca-9,12-dienoate. In terms of biological role, 7,8-linoleate diol synthase is a bifunctional enzyme that converts linoleic acid (18:2n-6) into 8-hydroperoxy-8(E),12(Z)-octadecadienoic acid (8-HPODE) and then catalyzes the isomerization of the resulting hydroperoxide to 7,8-dihydroxy-9(Z),12(Z)-octadecadienoic acid (7,8-DiHODE). The sequence is that of 7,8-linoleate diol synthase from Pyricularia oryzae (strain 70-15 / ATCC MYA-4617 / FGSC 8958) (Rice blast fungus).